The primary structure comprises 308 residues: D-alanine--D-alanine ligase (308 aa).

Residues 102 to 302 (KHVAKAAGIP…FGEFLRWMVE (201 aa)) form the ATP-grasp domain. 128 to 183 (PMKPPYVVKPVREGSSFGVVIVKEDQSHPPQVITSSEWRYGDRVMVERYIAGREFT) provides a ligand contact to ATP. Residues D252, E269, and N271 each contribute to the Mg(2+) site.

This sequence belongs to the D-alanine--D-alanine ligase family. It depends on Mg(2+) as a cofactor. Mn(2+) is required as a cofactor.

The protein resides in the cytoplasm. The catalysed reaction is 2 D-alanine + ATP = D-alanyl-D-alanine + ADP + phosphate + H(+). It functions in the pathway cell wall biogenesis; peptidoglycan biosynthesis. Functionally, cell wall formation. The chain is D-alanine--D-alanine ligase from Rhizobium meliloti (strain 1021) (Ensifer meliloti).